The primary structure comprises 499 residues: MTDTKTETTALSSDATEVRRQKLALLREQIGDVYPAHFHRTLSNAELAEKYADIEADVETGDTVTVAGRVYSSRNSGMFMDIHDASGKVQIFSHKDTTPEAARNLLPMIDIGDIIGVTGKVRRTKRGELTINAEEITMLTKSLLPMPEKWHGVSDIELRYRKRHLDILANEDSKLRFLQRSKILSGIRRFMEAEGFLEVETPMLQTVYGGATADPFKTFHNTLKMDMYLRIAPELFLKRTLVSGLSDKVFEINRNFRNEGVSTRHNPEFTMMECYWAYADYEDIMGLVERLFETLAIALHGTTEVEFQGQTISFKGPFKRVPMPDAVKEATGIDFLAIKTDEEARAAAKAAGFAVEKDWTWGECLAFIFEEKVEATLIQPSHVTHFPKDISPFAKEVPGEPRLVERFESYCNAWEVGNAFSELNDPEEQRRRMVEQLEQAHARGEKDKQLDDEFLDAIDQGMPPAGGLGIGVDRLIMLLTNAPSIRDVILFPARRNKAD.

Glu-408 and Glu-415 together coordinate Mg(2+).

This sequence belongs to the class-II aminoacyl-tRNA synthetase family. Homodimer. Requires Mg(2+) as cofactor.

The protein localises to the cytoplasm. The enzyme catalyses tRNA(Lys) + L-lysine + ATP = L-lysyl-tRNA(Lys) + AMP + diphosphate. This is Lysine--tRNA ligase from Agrobacterium fabrum (strain C58 / ATCC 33970) (Agrobacterium tumefaciens (strain C58)).